We begin with the raw amino-acid sequence, 248 residues long: Tetraspanin-18 (248 aa).

At Met-1–Met-13 the chain is on the cytoplasmic side. A helical transmembrane segment spans residues Phe-14 to Val-34. Residues Met-35 to Pro-49 are Extracellular-facing. The chain crosses the membrane as a helical span at residues Leu-50–Phe-70. Topologically, residues Leu-71–Leu-83 are cytoplasmic. Residues Leu-84–Leu-104 traverse the membrane as a helical segment. Residues Ala-105–Gly-223 are Extracellular-facing. N-linked (GlcNAc...) asparagine glycosylation is found at Asn-111 and Asn-129. A helical membrane pass occupies residues Ala-224–Phe-244. The Cytoplasmic segment spans residues Arg-245–Gln-248.

This sequence belongs to the tetraspanin (TM4SF) family. In terms of assembly, interacts with ORAI1; this interaction regulates ORAI1 exit from the endoplasmic (ER), and/or Golgi, and trafficking to the cell surface. Highly expressed in primary endothelial cells. Expressed in the embryo heart. Weakly expressed the embryo skeletal muscle.

It is found in the membrane. Functionally, plays a role in the cell surface localization of ORAI1 and may participate in the regulation of Ca(2+) signaling and the VWF release in response to inflammatory stimuli. This is Tetraspanin-18 from Homo sapiens (Human).